The sequence spans 194 residues: Peptidyl-tRNA hydrolase (194 aa).

Tyr21 is a tRNA binding site. The active-site Proton acceptor is the His26. TRNA contacts are provided by Tyr72, Asn74, and Asn120.

This sequence belongs to the PTH family. As to quaternary structure, monomer.

It is found in the cytoplasm. It catalyses the reaction an N-acyl-L-alpha-aminoacyl-tRNA + H2O = an N-acyl-L-amino acid + a tRNA + H(+). In terms of biological role, hydrolyzes ribosome-free peptidyl-tRNAs (with 1 or more amino acids incorporated), which drop off the ribosome during protein synthesis, or as a result of ribosome stalling. Its function is as follows. Catalyzes the release of premature peptidyl moieties from peptidyl-tRNA molecules trapped in stalled 50S ribosomal subunits, and thus maintains levels of free tRNAs and 50S ribosomes. This Halorhodospira halophila (strain DSM 244 / SL1) (Ectothiorhodospira halophila (strain DSM 244 / SL1)) protein is Peptidyl-tRNA hydrolase.